Consider the following 269-residue polypeptide: 3-methyl-2-oxobutanoate hydroxymethyltransferase (269 aa).

Mg(2+)-binding residues include aspartate 43 and aspartate 82. 3-methyl-2-oxobutanoate-binding positions include 43–44 (DS), aspartate 82, and lysine 110. Glutamate 112 contributes to the Mg(2+) binding site. Glutamate 179 acts as the Proton acceptor in catalysis.

This sequence belongs to the PanB family. In terms of assembly, homodecamer; pentamer of dimers. It depends on Mg(2+) as a cofactor.

It localises to the cytoplasm. It carries out the reaction 3-methyl-2-oxobutanoate + (6R)-5,10-methylene-5,6,7,8-tetrahydrofolate + H2O = 2-dehydropantoate + (6S)-5,6,7,8-tetrahydrofolate. It participates in cofactor biosynthesis; (R)-pantothenate biosynthesis; (R)-pantoate from 3-methyl-2-oxobutanoate: step 1/2. Catalyzes the reversible reaction in which hydroxymethyl group from 5,10-methylenetetrahydrofolate is transferred onto alpha-ketoisovalerate to form ketopantoate. The chain is 3-methyl-2-oxobutanoate hydroxymethyltransferase from Acinetobacter baumannii (strain SDF).